Consider the following 843-residue polypeptide: Beta-mannosidase B (843 aa).

Glutamate 432 acts as the Proton donor in catalysis.

This sequence belongs to the glycosyl hydrolase 2 family. Beta-mannosidase B subfamily.

The catalysed reaction is Hydrolysis of terminal, non-reducing beta-D-mannose residues in beta-D-mannosides.. It participates in glycan metabolism; N-glycan degradation. Its function is as follows. Exoglycosidase that cleaves the single beta-linked mannose residue from the non-reducing end of beta-mannosidic oligosaccharides of various complexity and length. Prefers mannobiose over mannotriose and has no activity against polymeric mannan. Is also severely restricted by galactosyl substitutions at the +1 subsite. Releases the terminal mannose residue from mannobiose, mannotriose and galactosyl-mannotriose (GM3), but not from galactosyl-mannobiose (GM2) or di-galactosyl-mannopentaose (G2M5). The chain is Beta-mannosidase B (mndB) from Emericella nidulans (strain FGSC A4 / ATCC 38163 / CBS 112.46 / NRRL 194 / M139) (Aspergillus nidulans).